We begin with the raw amino-acid sequence, 1486 residues long: Chromosome partition protein MukB (1486 aa).

34 to 41 (GGNGAGKS) contributes to the ATP binding site. 3 coiled-coil regions span residues 326–418 (LEAD…QYNQ), 444–480 (LETF…QAYQ), and 509–603 (RHLA…RAPV). Positions 666–783 (PGGSEDQRLN…EVPLFGRAAR (118 aa)) are flexible hinge. 3 coiled-coil regions span residues 835-923 (EAEI…AKLE), 977-1115 (EMLS…TAKA), and 1209-1266 (VEAI…QNVS).

The protein belongs to the SMC family. MukB subfamily. As to quaternary structure, homodimerization via its hinge domain. Binds to DNA via its C-terminal region. Interacts, and probably forms a ternary complex, with MukE and MukF via its C-terminal region. The complex formation is stimulated by calcium or magnesium. Interacts with tubulin-related protein FtsZ.

It localises to the cytoplasm. It is found in the nucleoid. Functionally, plays a central role in chromosome condensation, segregation and cell cycle progression. Functions as a homodimer, which is essential for chromosome partition. Involved in negative DNA supercoiling in vivo, and by this means organize and compact chromosomes. May achieve or facilitate chromosome segregation by condensation DNA from both sides of a centrally located replisome during cell division. This is Chromosome partition protein MukB from Escherichia coli O157:H7.